Here is a 288-residue protein sequence, read N- to C-terminus: 4-diphosphocytidyl-2-C-methyl-D-erythritol kinase (288 aa).

The active site involves lysine 10. Position 94–104 (94–104 (PVAAGLGGGSS)) interacts with ATP. The active site involves aspartate 136.

It belongs to the GHMP kinase family. IspE subfamily.

It carries out the reaction 4-CDP-2-C-methyl-D-erythritol + ATP = 4-CDP-2-C-methyl-D-erythritol 2-phosphate + ADP + H(+). It participates in isoprenoid biosynthesis; isopentenyl diphosphate biosynthesis via DXP pathway; isopentenyl diphosphate from 1-deoxy-D-xylulose 5-phosphate: step 3/6. Catalyzes the phosphorylation of the position 2 hydroxy group of 4-diphosphocytidyl-2C-methyl-D-erythritol. In Lactiplantibacillus plantarum (strain ATCC BAA-793 / NCIMB 8826 / WCFS1) (Lactobacillus plantarum), this protein is 4-diphosphocytidyl-2-C-methyl-D-erythritol kinase.